The primary structure comprises 352 residues: Pheromone-regulated membrane protein 6 (352 aa).

The Extracellular portion of the chain corresponds to 1 to 36; sequence MESSLQKLKFQDIDINLIPTAKWTTKLQYILYTWCQ. The chain crosses the membrane as a helical span at residues 37–57; sequence SILHVAMFFSDIYTCIKLLAF. Over 58 to 76 the chain is Cytoplasmic; the sequence is NTWSNNIIQPFLEFRISKW. The chain crosses the membrane as a helical span at residues 77 to 97; sequence LFSGCILCSSLILIWELVIGL. The Extracellular segment spans residues 98 to 227; the sequence is RVYRKKEITS…VILSFMLFSF (130 aa). The chain crosses the membrane as a helical span at residues 228–248; sequence IIWVILISKLILSIIIFIIFI. Residues 249 to 352 lie on the Cytoplasmic side of the membrane; the sequence is RPRFLSSKRK…FPQKYKHKYI (104 aa).

This sequence belongs to the KCH1 low affinity K(+) transporter family.

The protein resides in the cell membrane. It localises to the bud tip. It is found in the vacuole lumen. It carries out the reaction K(+)(in) = K(+)(out). In terms of biological role, low affinity potassium transporter that, with KCH1, participates in high-affinity Ca(2+) influx system (HACS) activation during the response to mating pheromone. Directly promotes K(+) influx and HACS may electrochemically respond to this K(+) influx. KCH1 and PRM6/KCH2 act at the apex of the calcium signaling pathway that is used for survival during prolonged exposures to mating pheromones. The sequence is that of Pheromone-regulated membrane protein 6 from Saccharomyces cerevisiae (strain ATCC 204508 / S288c) (Baker's yeast).